A 107-amino-acid polypeptide reads, in one-letter code: Large ribosomal subunit protein uL24 (107 aa).

It belongs to the universal ribosomal protein uL24 family. In terms of assembly, part of the 50S ribosomal subunit.

In terms of biological role, one of two assembly initiator proteins, it binds directly to the 5'-end of the 23S rRNA, where it nucleates assembly of the 50S subunit. Its function is as follows. One of the proteins that surrounds the polypeptide exit tunnel on the outside of the subunit. This Malacoplasma penetrans (strain HF-2) (Mycoplasma penetrans) protein is Large ribosomal subunit protein uL24.